The sequence spans 275 residues: Bis(5'-nucleosyl)-tetraphosphatase, symmetrical (275 aa).

The protein belongs to the Ap4A hydrolase family.

It carries out the reaction P(1),P(4)-bis(5'-adenosyl) tetraphosphate + H2O = 2 ADP + 2 H(+). Its function is as follows. Hydrolyzes diadenosine 5',5'''-P1,P4-tetraphosphate to yield ADP. In Haemophilus influenzae (strain PittEE), this protein is Bis(5'-nucleosyl)-tetraphosphatase, symmetrical.